The chain runs to 400 residues: NADH-quinone oxidoreductase subunit D (400 aa).

This sequence belongs to the complex I 49 kDa subunit family. As to quaternary structure, NDH-1 is composed of 14 different subunits. Subunits NuoB, C, D, E, F, and G constitute the peripheral sector of the complex.

The protein localises to the cell inner membrane. The enzyme catalyses a quinone + NADH + 5 H(+)(in) = a quinol + NAD(+) + 4 H(+)(out). Its function is as follows. NDH-1 shuttles electrons from NADH, via FMN and iron-sulfur (Fe-S) centers, to quinones in the respiratory chain. The immediate electron acceptor for the enzyme in this species is believed to be a menaquinone. Couples the redox reaction to proton translocation (for every two electrons transferred, four hydrogen ions are translocated across the cytoplasmic membrane), and thus conserves the redox energy in a proton gradient. The chain is NADH-quinone oxidoreductase subunit D from Chlorobium phaeovibrioides (strain DSM 265 / 1930) (Prosthecochloris vibrioformis (strain DSM 265)).